We begin with the raw amino-acid sequence, 520 residues long: Rho GTPase-activating protein gacV (520 aa).

The helical transmembrane segment at 8–28 (NIKTYYIIGIITLIFIVSAVI) threads the bilayer. The stretch at 28–192 (IKNQLSSSNQ…EEQEEEQFSM (165 aa)) forms a coiled coil. Disordered stretches follow at residues 33 to 73 (SSSN…KLDN), 121 to 189 (EEKQ…EEEQ), 348 to 373 (NNNN…NNNE), and 489 to 520 (LQEQ…DQEE). Basic residues predominate over residues 52–62 (SKGRGNKKGKK). A compositionally biased stretch (basic and acidic residues) spans 63–73 (PEKIQEKKLDN). A compositionally biased stretch (acidic residues) spans 140–189 (QEEEEEEEEQQEIEEDEEEEEGQEQEEEEEQQEIEEGEEEQQEEEQEEEQ). Residues 195 to 472 (VSIERLMDFQ…ILLKQKKEIA (278 aa)) form the Rho-GAP domain. Low complexity predominate over residues 348–372 (NNNNNNNNNNNNNNNNNNDNNNNNN). A coiled-coil region spans residues 480 to 520 (YFKDEYSKKLQEQNDQEEDNQEEEKDNQEEDEDEEDKDQEE). Over residues 493-520 (NDQEEDNQEEEKDNQEEDEDEEDKDQEE) the composition is skewed to acidic residues.

It localises to the membrane. Its function is as follows. Rho GTPase-activating protein involved in the signal transduction pathway. In Dictyostelium discoideum (Social amoeba), this protein is Rho GTPase-activating protein gacV (gacV).